We begin with the raw amino-acid sequence, 301 residues long: Protease HtpX homolog (301 aa).

The next 2 helical transmembrane spans lie at 11–31 (VLLL…IAGA) and 34–54 (NSAF…YSYW). Residue H138 coordinates Zn(2+). Residue E139 is part of the active site. Position 142 (H142) interacts with Zn(2+). The next 2 membrane-spanning stretches (helical) occupy residues 154–174 (AAAV…AAIF) and 188–208 (LVGL…QLAI). Residue E213 coordinates Zn(2+).

The protein belongs to the peptidase M48B family. Zn(2+) serves as cofactor.

The protein resides in the cell membrane. The chain is Protease HtpX homolog from Kocuria rhizophila (strain ATCC 9341 / DSM 348 / NBRC 103217 / DC2201).